Consider the following 342-residue polypeptide: MKALAKLERGPGLTLTRVKRPEVGHNDVLIKIHRTAICGTDIHIWKWDDWAQKTIPVPMHVGHEYVGEIVEMGQEVRGFAIGDRVSGEGHITCGFCRNCRAGRRHLCRNTVGVGVNREGAFAEYLAIPAFNAFKIPPEISDDLASIFDPFGNATHTALSFNLVGEDVLITGAGPIGVMAAAIAKHVGARNVVITDINDYRLELARKMGATRAVNVSRESLRDVMADLHMTEGFDVGLEMSGVPSAFTSMLEAMNHGGKVALLGIPPAQTAIDWNQVIFKGLEIKGIYGREMFETWYKMVAMLQSGLDLSPIITHRFAADDYEKGFAAMLSGESGKVILDWTV.

Cys38 provides a ligand contact to Zn(2+). Active-site charge relay system residues include Thr40 and His43. His63, Glu64, Cys93, Cys96, Cys99, and Cys107 together coordinate Zn(2+). NAD(+) is bound by residues Ile175, Asp195, Arg200, 262–264 (LGI), and 286–287 (IY).

This sequence belongs to the zinc-containing alcohol dehydrogenase family. As to quaternary structure, homotetramer. The cofactor is Zn(2+).

Its subcellular location is the cytoplasm. It carries out the reaction L-threonine + NAD(+) = (2S)-2-amino-3-oxobutanoate + NADH + H(+). It participates in amino-acid degradation; L-threonine degradation via oxydo-reductase pathway; glycine from L-threonine: step 1/2. In terms of biological role, catalyzes the NAD(+)-dependent oxidation of L-threonine to 2-amino-3-ketobutyrate. This is L-threonine 3-dehydrogenase from Burkholderia ambifaria (strain MC40-6).